The sequence spans 508 residues: Photosystem II CP47 reaction center protein (508 aa).

A run of 6 helical transmembrane segments spans residues 21-36, 101-115, 140-156, 203-218, 237-252, and 457-472; these read AVHI…WAGS, IVFS…IWHW, GIHL…FGAF, IAAG…FHLS, VLSS…AFVV, and TFAL…HGAR.

Belongs to the PsbB/PsbC family. PsbB subfamily. As to quaternary structure, PSII is composed of 1 copy each of membrane proteins PsbA, PsbB, PsbC, PsbD, PsbE, PsbF, PsbH, PsbI, PsbJ, PsbK, PsbL, PsbM, PsbT, PsbX, PsbY, PsbZ, Psb30/Ycf12, at least 3 peripheral proteins of the oxygen-evolving complex and a large number of cofactors. It forms dimeric complexes. The cofactor is Binds multiple chlorophylls. PSII binds additional chlorophylls, carotenoids and specific lipids..

The protein resides in the plastid. The protein localises to the chloroplast thylakoid membrane. Functionally, one of the components of the core complex of photosystem II (PSII). It binds chlorophyll and helps catalyze the primary light-induced photochemical processes of PSII. PSII is a light-driven water:plastoquinone oxidoreductase, using light energy to abstract electrons from H(2)O, generating O(2) and a proton gradient subsequently used for ATP formation. The protein is Photosystem II CP47 reaction center protein of Secale cereale (Rye).